The sequence spans 105 residues: UPF0145 protein Sala_0338 (105 aa).

It belongs to the UPF0145 family.

In Sphingopyxis alaskensis (strain DSM 13593 / LMG 18877 / RB2256) (Sphingomonas alaskensis), this protein is UPF0145 protein Sala_0338.